Consider the following 1442-residue polypeptide: ABC transporter G family member 35 (1442 aa).

The ABC transporter 1 domain occupies L169 to E442. G202 to T209 serves as a coordination point for ATP. The ABC transmembrane type-2 1 domain maps to E520–L733. The next 7 membrane-spanning stretches (helical) occupy residues F538–Y558, I573–M593, L619–V639, F657–T677, I683–L703, W714–F734, and I769–L789. The region spanning M840–P1092 is the ABC transporter 2 domain. G885–T892 serves as a coordination point for ATP. The 215-residue stretch at G1165–Y1379 folds into the ABC transmembrane type-2 2 domain. Helical transmembrane passes span L1186 to I1206, M1218 to V1238, L1272 to F1292, F1299 to M1319, V1329 to I1349, W1357 to S1377, and P1414 to I1434.

Belongs to the ABC transporter superfamily. ABCG family. PDR (TC 3.A.1.205) subfamily. As to expression, ubiquitous with higher levels in roots.

Its subcellular location is the membrane. Its function is as follows. May be a general defense protein. This chain is ABC transporter G family member 35 (ABCG35), found in Arabidopsis thaliana (Mouse-ear cress).